Reading from the N-terminus, the 362-residue chain is Probable prephenate dehydrogenase NovF (362 aa).

One can recognise a Prephenate/arogenate dehydrogenase domain in the interval 2-283 (RTAVIIGTGM…GIDGSNRVPG (282 aa)).

The protein belongs to the prephenate/arogenate dehydrogenase family.

It carries out the reaction prephenate + NAD(+) = 3-(4-hydroxyphenyl)pyruvate + CO2 + NADH. It functions in the pathway antibiotic biosynthesis; novobiocin biosynthesis. Functionally, probable prephenate dehydrogenase that produces 4-hydroxyphenylpyruvate (4HPP) in the novobiocin biosynthesis pathway. Novobiocin is an aminocoumarin family antibiotic that targets bacterial DNA gyrases. The sequence is that of Probable prephenate dehydrogenase NovF (novF) from Streptomyces niveus (Streptomyces spheroides).